Here is a 396-residue protein sequence, read N- to C-terminus: Ribosomal RNA large subunit methyltransferase I (396 aa).

Positions 2 to 79 (SVRLVLAKGR…QAESIDIAFF (78 aa)) constitute a PUA domain.

Belongs to the methyltransferase superfamily. RlmI family.

It localises to the cytoplasm. The enzyme catalyses cytidine(1962) in 23S rRNA + S-adenosyl-L-methionine = 5-methylcytidine(1962) in 23S rRNA + S-adenosyl-L-homocysteine + H(+). Specifically methylates the cytosine at position 1962 (m5C1962) of 23S rRNA. This chain is Ribosomal RNA large subunit methyltransferase I, found in Citrobacter koseri (strain ATCC BAA-895 / CDC 4225-83 / SGSC4696).